Reading from the N-terminus, the 580-residue chain is 2-succinyl-5-enolpyruvyl-6-hydroxy-3-cyclohexene-1-carboxylate synthase (580 aa).

Residues 178-199 (LEPTPMPGDLTEPPAAAQPRDD) are disordered.

The protein belongs to the TPP enzyme family. MenD subfamily. As to quaternary structure, homodimer. Mg(2+) serves as cofactor. It depends on Mn(2+) as a cofactor. Thiamine diphosphate is required as a cofactor.

It carries out the reaction isochorismate + 2-oxoglutarate + H(+) = 5-enolpyruvoyl-6-hydroxy-2-succinyl-cyclohex-3-ene-1-carboxylate + CO2. It functions in the pathway quinol/quinone metabolism; 1,4-dihydroxy-2-naphthoate biosynthesis; 1,4-dihydroxy-2-naphthoate from chorismate: step 2/7. The protein operates within quinol/quinone metabolism; menaquinone biosynthesis. In terms of biological role, catalyzes the thiamine diphosphate-dependent decarboxylation of 2-oxoglutarate and the subsequent addition of the resulting succinic semialdehyde-thiamine pyrophosphate anion to isochorismate to yield 2-succinyl-5-enolpyruvyl-6-hydroxy-3-cyclohexene-1-carboxylate (SEPHCHC). This is 2-succinyl-5-enolpyruvyl-6-hydroxy-3-cyclohexene-1-carboxylate synthase from Roseiflexus castenholzii (strain DSM 13941 / HLO8).